The following is a 94-amino-acid chain: Evasin P1086 (94 aa).

The first 28 residues, 1-28, serve as a signal peptide directing secretion; the sequence is MAFNVITFLQLAVFVVILFNINLHSASA. Disulfide bonds link Cys48–Cys67, Cys52–Cys69, and Cys63–Cys80. A glycan (N-linked (GlcNAc...) asparagine) is linked at Asn74.

The protein resides in the secreted. In terms of biological role, salivary chemokine-binding protein which binds to host chemokines CXCL1, CXCL2, CXCL3, CXCL5, CXCL6, CXCL10, CXCL12 and CXCL13. The polypeptide is Evasin P1086 (Ixodes ricinus (Common tick)).